The primary structure comprises 344 residues: Ferrochelatase (344 aa).

Fe cation is bound by residues H214 and E295.

It belongs to the ferrochelatase family.

The protein localises to the cytoplasm. The enzyme catalyses heme b + 2 H(+) = protoporphyrin IX + Fe(2+). The protein operates within porphyrin-containing compound metabolism; protoheme biosynthesis; protoheme from protoporphyrin-IX: step 1/1. In terms of biological role, catalyzes the ferrous insertion into protoporphyrin IX. The polypeptide is Ferrochelatase (Rhizobium etli (strain CIAT 652)).